The primary structure comprises 306 residues: Porphobilinogen deaminase (306 aa).

Cys-234 carries the post-translational modification S-(dipyrrolylmethanemethyl)cysteine.

The protein belongs to the HMBS family. As to quaternary structure, monomer. The cofactor is dipyrromethane.

It catalyses the reaction 4 porphobilinogen + H2O = hydroxymethylbilane + 4 NH4(+). Its pathway is porphyrin-containing compound metabolism; protoporphyrin-IX biosynthesis; coproporphyrinogen-III from 5-aminolevulinate: step 2/4. In terms of biological role, tetrapolymerization of the monopyrrole PBG into the hydroxymethylbilane pre-uroporphyrinogen in several discrete steps. The protein is Porphobilinogen deaminase of Mycobacteroides abscessus (strain ATCC 19977 / DSM 44196 / CCUG 20993 / CIP 104536 / JCM 13569 / NCTC 13031 / TMC 1543 / L948) (Mycobacterium abscessus).